Consider the following 105-residue polypeptide: Saimiri transformation-associated protein (105 aa).

The Cytoplasmic segment spans residues 1 to 75; it reads MASEPNLRYP…GPPGPSGLPG (75 aa). The segment at 1-75 is disordered; that stretch reads MASEPNLRYP…GPPGPSGLPG (75 aa). The region spanning 15-74 is the Collagen-like domain; the sequence is GDRGPQGPPGPPGPQGPPGPQGPPGPQGPPGPQGPPGPQGPPGPQGPPGPPGPPGPSGLP. Over residues 20-71 the composition is skewed to pro residues; it reads QGPPGPPGPQGPPGPQGPPGPQGPPGPQGPPGPQGPPGPQGPPGPPGPPGPS. The chain crosses the membrane as a helical span at residues 76–96; sequence LFVTNLLLGIIILLLLIIVAI. The Extracellular segment spans residues 97–105; the sequence is LLVSKLVVN.

In terms of assembly, binds to host RAS and TRAF2.

Its subcellular location is the host membrane. Functionally, acts synergistically with Tip to stimulate NF-kappa-B activity and interleukin-2 gene expression by binding to host TRAF proteins. Activation of NF-kappa-B protects lymphocytes from apoptosis, thereby facilitating viral induced cell transformation. The polypeptide is Saimiri transformation-associated protein (Saimiriine herpesvirus 2 (strain 484-77) (SaHV-2)).